A 482-amino-acid chain; its full sequence is tRNA sulfurtransferase (482 aa).

The 105-residue stretch at 61-165 (PVIADALTRI…NDKLMLVKAR (105 aa)) folds into the THUMP domain. ATP is bound by residues 183–184 (LI), K265, G287, and Q296. C344 and C456 form a disulfide bridge. Residues 404–482 (FDADQVILDI…GFTNVKVYRP (79 aa)) form the Rhodanese domain. The Cysteine persulfide intermediate role is filled by C456.

Belongs to the ThiI family.

The protein resides in the cytoplasm. It catalyses the reaction [ThiI sulfur-carrier protein]-S-sulfanyl-L-cysteine + a uridine in tRNA + 2 reduced [2Fe-2S]-[ferredoxin] + ATP + H(+) = [ThiI sulfur-carrier protein]-L-cysteine + a 4-thiouridine in tRNA + 2 oxidized [2Fe-2S]-[ferredoxin] + AMP + diphosphate. It carries out the reaction [ThiS sulfur-carrier protein]-C-terminal Gly-Gly-AMP + S-sulfanyl-L-cysteinyl-[cysteine desulfurase] + AH2 = [ThiS sulfur-carrier protein]-C-terminal-Gly-aminoethanethioate + L-cysteinyl-[cysteine desulfurase] + A + AMP + 2 H(+). It functions in the pathway cofactor biosynthesis; thiamine diphosphate biosynthesis. Catalyzes the ATP-dependent transfer of a sulfur to tRNA to produce 4-thiouridine in position 8 of tRNAs, which functions as a near-UV photosensor. Also catalyzes the transfer of sulfur to the sulfur carrier protein ThiS, forming ThiS-thiocarboxylate. This is a step in the synthesis of thiazole, in the thiamine biosynthesis pathway. The sulfur is donated as persulfide by IscS. In Serratia proteamaculans (strain 568), this protein is tRNA sulfurtransferase.